The chain runs to 152 residues: Large ribosomal subunit protein bL17 (152 aa).

Positions 121–140 are disordered; it reads APSASQKTGKQDRAKRVKGS.

This sequence belongs to the bacterial ribosomal protein bL17 family. As to quaternary structure, part of the 50S ribosomal subunit. Contacts protein L32.

This Pelodictyon phaeoclathratiforme (strain DSM 5477 / BU-1) protein is Large ribosomal subunit protein bL17.